The chain runs to 166 residues: Large ribosomal subunit protein uL11 (166 aa).

Arg67 carries the N5-methylarginine modification.

This sequence belongs to the universal ribosomal protein uL11 family.

This chain is Large ribosomal subunit protein uL11 (RPL12), found in Encephalitozoon cuniculi (strain GB-M1) (Microsporidian parasite).